A 184-amino-acid polypeptide reads, in one-letter code: Large ribosomal subunit protein uL5c (184 aa).

The protein belongs to the universal ribosomal protein uL5 family. In terms of assembly, part of the 50S ribosomal subunit; contacts the 5S rRNA.

The protein resides in the plastid. It localises to the chloroplast. Binds 5S rRNA, forms part of the central protuberance of the 50S subunit. This is Large ribosomal subunit protein uL5c (rpl5) from Ostreococcus tauri.